A 582-amino-acid polypeptide reads, in one-letter code: BTB/POZ domain and ankyrin repeat-containing protein NPR1 (582 aa).

A compositionally biased stretch (polar residues) spans 1 to 12; the sequence is MEPPTSHVTNAF. The segment at 1-27 is disordered; sequence MEPPTSHVTNAFSDSDSASVEEGDADA. The 86-residue stretch at 55–140 folds into the BTB domain; that stretch reads ADARIAVPGG…VLDYLYSGRV (86 aa). The C2HC NPR-type zinc finger occupies 147-161; sequence ACLCVDEDCAHVGCH. Zn(2+) contacts are provided by Cys150, Cys155, His157, and Cys160. ANK repeat units lie at residues 229 to 258, 269 to 299, 301 to 328, and 332 to 361; these read RSNL…SLGL, KHVR…NLDD, FALH…DVNH, and RGYT…RPAD. Positions 391-526 are salicylic acid-binding core (SBC); it reads PSPKDRLCIE…VLDKIMDDET (136 aa). Arg436 serves as a coordination point for salicylate. Disordered stretches follow at residues 525-544 and 551-582; these read ETDP…KRFH and QKAF…RPRR. The span at 553–563 shows a compositional bias: basic and acidic residues; that stretch reads AFHEDKEENDR. Low complexity predominate over residues 564–574; sequence SGLSSSSSSTS.

Belongs to the plant 'ANKYRIN-BTB/POZ' family. 'NPR1-like' subfamily. Oligomer in an uninduced state; disulfide-linked. Forms activated monomer upon changes in cellular redox potential. Interacts with TGA2.2. Interacts with NRR.

It is found in the cytoplasm. It localises to the nucleus. Its subcellular location is the nuclear body. It functions in the pathway protein modification; protein ubiquitination. In terms of biological role, salicylic acid (SA)-binding substrate-specific adapter of an E3 ubiquitin-protein ligase complex (CUL3-RBX1-BTB) which mediates the ubiquitination and subsequent proteasomal degradation of target proteins. Transcription cofactor that represses gene expression in the absence of salicylic acid (SA), when attached to negative cis-elements (W-box) with WRKY transcription factors, but stimulates gene expression upon activation by SA, when sumoylated and attached to positive cis-elements (as-1) with TGA transcription factors, thus confering immunity through a series of gene regulations ending in a significant increase in antimicrobial and defense genes expression. Key positive factor of disease resistance. Involved in defense response against the bacterial blight disease caused by Xanthomonas oryzae pv. oryzae (Xoo). Plants over-expressing NPR1/NH1 acquire high levels of resistance to Xoo, express constitutively defense genes and develop lesion-mimic spots on leaves at pre-flowering stage. Involved in basal resistance to the blast pathogen Magnaporthe oryzae. Plants over-expressing NPR1/NH1 have increased resistance to M.oryzae infection. Plays an essential role in benzothiadiazole (BTH)-induced resistance to the blast fungus disease caused by Magnaporthe oryzae. Functions as a transcriptional coactivator of TGA2.1 and LG2 in vitro. Involved in defense response against herbivore. Plants silencing NPR1/NH1 have increased herbivore-induced trypsin proteinase inhibitors and volatiles, which reduces the performance of the striped stem borer (SSB) Chilo suppressalis. The sequence is that of BTB/POZ domain and ankyrin repeat-containing protein NPR1 from Oryza sativa subsp. indica (Rice).